The chain runs to 400 residues: NADPH dehydrogenase 3 (400 aa).

FMN contacts are provided by threonine 38 and glutamine 115. Histidine 192 and asparagine 195 together coordinate substrate. Tyrosine 197 acts as the Proton donor in catalysis. Residues arginine 244 and arginine 349 each coordinate FMN. Tyrosine 376 provides a ligand contact to substrate.

In terms of assembly, homodimer or heterodimer with OYE2. It depends on FMN as a cofactor.

The enzyme catalyses A + NADPH + H(+) = AH2 + NADP(+). In terms of biological role, flavin-dependent enoate reductase that catalyzes the chemo- and stereoslective hydrogenation of electron-poor alkenes. The enzyme is reduced by NADPH, and oxygen, quinones, and alpha,beta-unsaturated aldehydes and ketones can act as electron acceptors to complete catalytic turnover. The physiological oxidant remains elusive. Has a prooxidant activity, increasing reactive oxygen species (ROS) levels when overexpressed. Formation of OYE2-OYE3 heterodimers contribute to the induction of programmed cell death upon oxidative stress. This chain is NADPH dehydrogenase 3, found in Saccharomyces cerevisiae (strain ATCC 204508 / S288c) (Baker's yeast).